A 450-amino-acid polypeptide reads, in one-letter code: 3-phosphoshikimate 1-carboxyvinyltransferase (450 aa).

3-phosphoshikimate is bound by residues K28, S29, and R33. Phosphoenolpyruvate is bound at residue K28. Positions 100 and 128 each coordinate phosphoenolpyruvate. 4 residues coordinate 3-phosphoshikimate: S173, Q175, D326, and K353. Q175 contacts phosphoenolpyruvate. The Proton acceptor role is filled by D326. 2 residues coordinate phosphoenolpyruvate: R357 and R402.

Belongs to the EPSP synthase family. Monomer.

Its subcellular location is the cytoplasm. It catalyses the reaction 3-phosphoshikimate + phosphoenolpyruvate = 5-O-(1-carboxyvinyl)-3-phosphoshikimate + phosphate. Its pathway is metabolic intermediate biosynthesis; chorismate biosynthesis; chorismate from D-erythrose 4-phosphate and phosphoenolpyruvate: step 6/7. Catalyzes the transfer of the enolpyruvyl moiety of phosphoenolpyruvate (PEP) to the 5-hydroxyl of shikimate-3-phosphate (S3P) to produce enolpyruvyl shikimate-3-phosphate and inorganic phosphate. This chain is 3-phosphoshikimate 1-carboxyvinyltransferase, found in Brucella abortus (strain S19).